We begin with the raw amino-acid sequence, 233 residues long: Large ribosomal subunit protein uL1 (233 aa).

The protein belongs to the universal ribosomal protein uL1 family. Part of the 50S ribosomal subunit.

Binds directly to 23S rRNA. The L1 stalk is quite mobile in the ribosome, and is involved in E site tRNA release. Functionally, protein L1 is also a translational repressor protein, it controls the translation of the L11 operon by binding to its mRNA. The polypeptide is Large ribosomal subunit protein uL1 (Geobacillus sp. (strain WCH70)).